Here is a 572-residue protein sequence, read N- to C-terminus: mRNA cap guanine-N(7) methyltransferase (572 aa).

Disordered regions lie at residues 1–75 (MPED…GSRV) and 110–140 (EKAI…FPSS). Basic and acidic residues-rich tracts occupy residues 24 to 39 (ANDG…RVHD) and 59 to 69 (SADENKDKKYD). The segment covering 123–140 (TTTTPSSTTSSSSSFPSS) has biased composition (low complexity). An mRNA cap 0 methyltransferase domain is found at 262–571 (SPIYKLRNFN…FYVAFVFEKV (310 aa)). 271 to 272 (NN) is an mRNA binding site. Residues K275, C302, D324, D366, Q396, and Y401 each contribute to the S-adenosyl-L-methionine site.

Belongs to the class I-like SAM-binding methyltransferase superfamily. mRNA cap 0 methyltransferase family.

It localises to the nucleus. It catalyses the reaction a 5'-end (5'-triphosphoguanosine)-ribonucleoside in mRNA + S-adenosyl-L-methionine = a 5'-end (N(7)-methyl 5'-triphosphoguanosine)-ribonucleoside in mRNA + S-adenosyl-L-homocysteine. Its function is as follows. Responsible for methylating the 5'-cap structure of mRNAs. The chain is mRNA cap guanine-N(7) methyltransferase (ABD1) from Lodderomyces elongisporus (strain ATCC 11503 / CBS 2605 / JCM 1781 / NBRC 1676 / NRRL YB-4239) (Yeast).